The sequence spans 463 residues: MAALRALGGLRGVAAQVLRPGAGVRLPIQPSRGVRQWQPDVEWAQQFGGAVMYPSKETAHWKPPPWNDVEPPKDTIVKNMTLNFGPQHPAAHGVLRLVMELSGEMVRKCDPHIGLLHRGTEKLIEYKTYLQALPYFDRLDYVSMMCNEQAYSLAVEKLLNIRPPPRAQWIRVLFGEITRLLNHIMAVTTHALDLGAMTPFFWLFEEREKMFEFYERVSGARMHAAYIRPGGVHQDLPLGLMDDIYQFSKNFSLRLDELEELLTNNRIWRNRTIDIGVVTAEEALNYGFSGVMLRGSGIQWDLRKTQPYDVYDQVEFDVPVGSRGDCYDRYLCRVEEMRQSLRIIAQCLNKMPPGEIKVDDAKVSPPKRAEMKTSMESLIHHFKLYTEGYQVPPGATYTAIEAPKGEFGVYLVSDGSSRPYRCKIKAPGFAHLASLDKMSKGHMLADVVAIIGTQDIVFGEVDR.

Residues 1 to 33 (MAALRALGGLRGVAAQVLRPGAGVRLPIQPSRG) constitute a mitochondrion transit peptide. Lysine 62 is subject to N6-acetyllysine. Arginine 118 carries the symmetric dimethylarginine modification. Residues cysteine 326, cysteine 332, and cysteine 347 each coordinate [4Fe-4S] cluster.

It belongs to the complex I 49 kDa subunit family. In terms of assembly, core subunit of respiratory chain NADH dehydrogenase (Complex I) which is composed of 45 different subunits. Component of the iron-sulfur (IP) fragment of the enzyme. Interacts with NDUFAF3. Interacts with NDUFAF7. Interacts with CERS2. The cofactor is [4Fe-4S] cluster. Dimethylation at Arg-118 by NDUFAF7 takes place after NDUFS2 assembles into the complex I, leading to stabilize the early intermediate complex.

The protein localises to the mitochondrion inner membrane. It carries out the reaction a ubiquinone + NADH + 5 H(+)(in) = a ubiquinol + NAD(+) + 4 H(+)(out). In terms of biological role, core subunit of the mitochondrial membrane respiratory chain NADH dehydrogenase (Complex I) which catalyzes electron transfer from NADH through the respiratory chain, using ubiquinone as an electron acceptor. Essential for the catalytic activity and assembly of complex I. Redox-sensitive, critical component of the oxygen-sensing pathway in the pulmonary vasculature which plays a key role in acute pulmonary oxygen-sensing and hypoxic pulmonary vasoconstriction. Plays an important role in carotid body sensing of hypoxia. Essential for glia-like neural stem and progenitor cell proliferation, differentiation and subsequent oligodendrocyte or neuronal maturation. This Pongo pygmaeus (Bornean orangutan) protein is NADH dehydrogenase [ubiquinone] iron-sulfur protein 2, mitochondrial (NDUFS2).